A 79-amino-acid polypeptide reads, in one-letter code: Ferredoxin (79 aa).

4Fe-4S ferredoxin-type domains follow at residues 2–30 and 31–60; these read PHVI…YDGG and DQFY…PEED. Residues C9 and C17 each coordinate [3Fe-4S] cluster. Positions 21, 40, 43, and 46 each coordinate [4Fe-4S] cluster. Residue C50 coordinates [3Fe-4S] cluster.

It depends on [4Fe-4S] cluster as a cofactor. The cofactor is [3Fe-4S] cluster.

Ferredoxins are iron-sulfur proteins that transfer electrons in a wide variety of metabolic reactions. This chain is Ferredoxin, found in Thermus thermophilus (strain ATCC 27634 / DSM 579 / HB8).